A 105-amino-acid polypeptide reads, in one-letter code: Pyrimidine/purine nucleoside phosphorylase (105 aa).

The protein belongs to the nucleoside phosphorylase PpnP family.

It catalyses the reaction a purine D-ribonucleoside + phosphate = a purine nucleobase + alpha-D-ribose 1-phosphate. The enzyme catalyses adenosine + phosphate = alpha-D-ribose 1-phosphate + adenine. It carries out the reaction cytidine + phosphate = cytosine + alpha-D-ribose 1-phosphate. The catalysed reaction is guanosine + phosphate = alpha-D-ribose 1-phosphate + guanine. It catalyses the reaction inosine + phosphate = alpha-D-ribose 1-phosphate + hypoxanthine. The enzyme catalyses thymidine + phosphate = 2-deoxy-alpha-D-ribose 1-phosphate + thymine. It carries out the reaction uridine + phosphate = alpha-D-ribose 1-phosphate + uracil. The catalysed reaction is xanthosine + phosphate = alpha-D-ribose 1-phosphate + xanthine. Functionally, catalyzes the phosphorolysis of diverse nucleosides, yielding D-ribose 1-phosphate and the respective free bases. Can use uridine, adenosine, guanosine, cytidine, thymidine, inosine and xanthosine as substrates. Also catalyzes the reverse reactions. This Cupriavidus pinatubonensis (strain JMP 134 / LMG 1197) (Cupriavidus necator (strain JMP 134)) protein is Pyrimidine/purine nucleoside phosphorylase.